The following is a 351-amino-acid chain: S-adenosylmethionine:tRNA ribosyltransferase-isomerase (351 aa).

This sequence belongs to the QueA family. In terms of assembly, monomer.

It localises to the cytoplasm. It catalyses the reaction 7-aminomethyl-7-carbaguanosine(34) in tRNA + S-adenosyl-L-methionine = epoxyqueuosine(34) in tRNA + adenine + L-methionine + 2 H(+). Its pathway is tRNA modification; tRNA-queuosine biosynthesis. Functionally, transfers and isomerizes the ribose moiety from AdoMet to the 7-aminomethyl group of 7-deazaguanine (preQ1-tRNA) to give epoxyqueuosine (oQ-tRNA). In Hyphomonas neptunium (strain ATCC 15444), this protein is S-adenosylmethionine:tRNA ribosyltransferase-isomerase.